The chain runs to 341 residues: Anthranilate phosphoribosyltransferase (341 aa).

Residues G83, 86 to 87, T91, 93 to 96, 111 to 119, and S123 contribute to the 5-phospho-alpha-D-ribose 1-diphosphate site; these read GD, NIST, and KHGNRGVSS. G83 serves as a coordination point for anthranilate. S95 provides a ligand contact to Mg(2+). N114 is a binding site for anthranilate. R169 contributes to the anthranilate binding site. The Mg(2+) site is built by D228 and E229.

It belongs to the anthranilate phosphoribosyltransferase family. As to quaternary structure, homodimer. Mg(2+) is required as a cofactor.

It catalyses the reaction N-(5-phospho-beta-D-ribosyl)anthranilate + diphosphate = 5-phospho-alpha-D-ribose 1-diphosphate + anthranilate. It functions in the pathway amino-acid biosynthesis; L-tryptophan biosynthesis; L-tryptophan from chorismate: step 2/5. Catalyzes the transfer of the phosphoribosyl group of 5-phosphorylribose-1-pyrophosphate (PRPP) to anthranilate to yield N-(5'-phosphoribosyl)-anthranilate (PRA). The sequence is that of Anthranilate phosphoribosyltransferase from Cupriavidus necator (strain ATCC 17699 / DSM 428 / KCTC 22496 / NCIMB 10442 / H16 / Stanier 337) (Ralstonia eutropha).